Here is a 226-residue protein sequence, read N- to C-terminus: Ribonuclease 3 (226 aa).

In terms of domain architecture, RNase III spans 6–128; that stretch reads TKKIQKVLGY…LIGSIYLDSN (123 aa). A Mg(2+)-binding site is contributed by glutamate 41. Aspartate 45 is a catalytic residue. Asparagine 114 and glutamate 117 together coordinate Mg(2+). The active site involves glutamate 117. The 71-residue stretch at 155–225 folds into the DRBM domain; it reads DPKTRLQEYL…AQKALIKLGV (71 aa).

This sequence belongs to the ribonuclease III family. As to quaternary structure, homodimer. It depends on Mg(2+) as a cofactor.

It localises to the cytoplasm. The catalysed reaction is Endonucleolytic cleavage to 5'-phosphomonoester.. Digests double-stranded RNA. Involved in the processing of primary rRNA transcript to yield the immediate precursors to the large and small rRNAs (23S and 16S). Processes some mRNAs, and tRNAs when they are encoded in the rRNA operon. Processes pre-crRNA and tracrRNA of type II CRISPR loci if present in the organism. This Buchnera aphidicola subsp. Acyrthosiphon pisum (strain 5A) protein is Ribonuclease 3.